The sequence spans 1892 residues: Protein TIC 214 (1892 aa).

Helical transmembrane passes span 12-32 (LISLYMTIINSVVMVGLYYGF), 68-88 (FIAGQLMMFISIYYVPLHLAL), 89-109 (GKPHTITVLALPYLLFHFFWN), 128-148 (LSIQCVFLNNLIIQLFNHFIL), 176-196 (VGWLIGHILLMKWVGLVLVWI), and 225-245 (IFSILLFITCVYYLGRIPSPI). The span at 256 to 266 (PEEVGESEEER) shows a compositional bias: acidic residues. The interval 256 to 299 (PEEVGESEEERNIEIETISEGGGANQKQGTEENTSSSLFSEEEV) is disordered. Positions 280–294 (NQKQGTEENTSSSLF) are enriched in polar residues. The chain crosses the membrane as a helical span at residues 1115-1135 (FYFFINFFIEKIYMDILLYII). A disordered region spans residues 1613-1636 (SNQEKDVEEDYDKSDKKKRRKKKQ).

This sequence belongs to the TIC214 family. Part of the Tic complex.

The protein localises to the plastid. Its subcellular location is the chloroplast inner membrane. Involved in protein precursor import into chloroplasts. May be part of an intermediate translocation complex acting as a protein-conducting channel at the inner envelope. This chain is Protein TIC 214, found in Gossypium hirsutum (Upland cotton).